The following is a 346-amino-acid chain: NADH-ubiquinone oxidoreductase chain 2 (346 aa).

The next 10 membrane-spanning stretches (helical) occupy residues 3 to 23 (PIIF…VMIS), 25 to 45 (HWLL…PIMM), 67 to 87 (SMLL…WTVM), 96 to 116 (MLMT…FWVP), 122 to 142 (IPLS…MSVL), 145 to 165 (IFPS…ILIG), 200 to 220 (TLLN…MFMA), 238 to 258 (IMTI…PLSG), 273 to 293 (NSII…YFYM), and 324 to 344 (FLPT…MLSV).

Belongs to the complex I subunit 2 family. Core subunit of respiratory chain NADH dehydrogenase (Complex I) which is composed of 45 different subunits. Interacts with TMEM242.

The protein resides in the mitochondrion inner membrane. It carries out the reaction a ubiquinone + NADH + 5 H(+)(in) = a ubiquinol + NAD(+) + 4 H(+)(out). Functionally, core subunit of the mitochondrial membrane respiratory chain NADH dehydrogenase (Complex I) which catalyzes electron transfer from NADH through the respiratory chain, using ubiquinone as an electron acceptor. Essential for the catalytic activity and assembly of complex I. The chain is NADH-ubiquinone oxidoreductase chain 2 from Bos mutus grunniens (Wild yak).